The primary structure comprises 241 residues: Ubiquinone biosynthesis O-methyltransferase (241 aa).

Positions 42, 62, 83, and 127 each coordinate S-adenosyl-L-methionine.

This sequence belongs to the methyltransferase superfamily. UbiG/COQ3 family.

The catalysed reaction is a 3-demethylubiquinol + S-adenosyl-L-methionine = a ubiquinol + S-adenosyl-L-homocysteine + H(+). The enzyme catalyses a 3-(all-trans-polyprenyl)benzene-1,2-diol + S-adenosyl-L-methionine = a 2-methoxy-6-(all-trans-polyprenyl)phenol + S-adenosyl-L-homocysteine + H(+). The protein operates within cofactor biosynthesis; ubiquinone biosynthesis. Functionally, O-methyltransferase that catalyzes the 2 O-methylation steps in the ubiquinone biosynthetic pathway. The protein is Ubiquinone biosynthesis O-methyltransferase of Pectobacterium atrosepticum (strain SCRI 1043 / ATCC BAA-672) (Erwinia carotovora subsp. atroseptica).